The following is a 255-amino-acid chain: tRNA (guanine-N(1)-)-methyltransferase (255 aa).

Residues Gly-113 and 133 to 138 (IGDYVL) contribute to the S-adenosyl-L-methionine site.

The protein belongs to the RNA methyltransferase TrmD family. In terms of assembly, homodimer.

It localises to the cytoplasm. It catalyses the reaction guanosine(37) in tRNA + S-adenosyl-L-methionine = N(1)-methylguanosine(37) in tRNA + S-adenosyl-L-homocysteine + H(+). Its function is as follows. Specifically methylates guanosine-37 in various tRNAs. The chain is tRNA (guanine-N(1)-)-methyltransferase from Klebsiella pneumoniae subsp. pneumoniae (strain ATCC 700721 / MGH 78578).